The following is a 121-amino-acid chain: Putative viral protein-binding protein C1 (121 aa).

Positions 21–57 are disordered; it reads PWDRTRGHPDVPWRNLTSSPTRPLAQPAGSCMPAEPS.

Interacts with core protein of hepatitis B virus.

This Homo sapiens (Human) protein is Putative viral protein-binding protein C1.